Consider the following 209-residue polypeptide: MSVKEINHPLVQHKLGLMREAGISSKNFRELASEVGNLLTYEATRELETETVEINGWNDQPIKVKKIKGKKITIVPILRAGLGMLDGVMQLIPNAKVSVVGLYRDEETLQPVAYFDKVVKDVEERTALIVDPMLATGGTLIATIDLLKEKGCQHIMGLFLVAAPEGIEAVVSKHPDVDIYTAAVDDKLNEHGYILPGLGDAGDKIFGTR.

5-phospho-alpha-D-ribose 1-diphosphate-binding positions include arginine 79, arginine 104, and 131 to 139 (DPMLATGGT). Uracil is bound by residues isoleucine 194 and 199 to 201 (GDA). Aspartate 200 lines the 5-phospho-alpha-D-ribose 1-diphosphate pocket.

The protein belongs to the UPRTase family. Mg(2+) serves as cofactor.

The catalysed reaction is UMP + diphosphate = 5-phospho-alpha-D-ribose 1-diphosphate + uracil. It participates in pyrimidine metabolism; UMP biosynthesis via salvage pathway; UMP from uracil: step 1/1. Allosterically activated by GTP. In terms of biological role, catalyzes the conversion of uracil and 5-phospho-alpha-D-ribose 1-diphosphate (PRPP) to UMP and diphosphate. This chain is Uracil phosphoribosyltransferase, found in Pseudoalteromonas atlantica (strain T6c / ATCC BAA-1087).